Here is a 315-residue protein sequence, read N- to C-terminus: Adenine deaminase (315 aa).

The Zn(2+) site is built by H14, H16, and H194. E197 serves as the catalytic Proton donor. D275 lines the Zn(2+) pocket. D276 provides a ligand contact to substrate.

This sequence belongs to the metallo-dependent hydrolases superfamily. Adenosine and AMP deaminases family. Adenine deaminase type 2 subfamily. Zn(2+) is required as a cofactor.

The enzyme catalyses adenine + H2O + H(+) = hypoxanthine + NH4(+). Catalyzes the hydrolytic deamination of adenine to hypoxanthine. Plays an important role in the purine salvage pathway and in nitrogen catabolism. The chain is Adenine deaminase from Ectopseudomonas mendocina (strain ymp) (Pseudomonas mendocina).